The following is a 167-amino-acid chain: NADH-ubiquinone oxidoreductase chain 4 (167 aa).

3 helical membrane-spanning segments follow: residues phenylalanine 2–leucine 22, leucine 44–proline 64, and isoleucine 86–methionine 106.

It belongs to the complex I subunit 4 family.

It is found in the mitochondrion membrane. It catalyses the reaction a ubiquinone + NADH + 5 H(+)(in) = a ubiquinol + NAD(+) + 4 H(+)(out). Its function is as follows. Core subunit of the mitochondrial membrane respiratory chain NADH dehydrogenase (Complex I) that is believed to belong to the minimal assembly required for catalysis. Complex I functions in the transfer of electrons from NADH to the respiratory chain. The immediate electron acceptor for the enzyme is believed to be ubiquinone. This chain is NADH-ubiquinone oxidoreductase chain 4 (MT-ND4), found in Carlito syrichta (Philippine tarsier).